We begin with the raw amino-acid sequence, 347 residues long: NADH-ubiquinone oxidoreductase chain 2 (347 aa).

10 consecutive transmembrane segments (helical) span residues 3 to 23, 25 to 45, 59 to 79, 93 to 115, 149 to 169, 178 to 198, 200 to 220, 242 to 262, 274 to 294, and 323 to 343; these read PPILIIILSTVISGTMIVLTS, HWLLTWIGFEMNMLAIIPILM, YFLTQATASMLLMMGIIINLL, MASTMMTIAMTMKLGLAPFHFWV, INTNLLMTMATMSVLIGGWGG, ILAYSSIAHMGWMVAIMTYNP, VMILNLMMYIMMTLTSFMLFI, SFILVLMLSLGGLPPLSGFIP, EMIILPTLLAITALLNLYFYM, and MALLPPLIIISTMLLPLTPMM.

Belongs to the complex I subunit 2 family. In terms of assembly, core subunit of respiratory chain NADH dehydrogenase (Complex I) which is composed of 45 different subunits. Interacts with TMEM242.

Its subcellular location is the mitochondrion inner membrane. It carries out the reaction a ubiquinone + NADH + 5 H(+)(in) = a ubiquinol + NAD(+) + 4 H(+)(out). Functionally, core subunit of the mitochondrial membrane respiratory chain NADH dehydrogenase (Complex I) which catalyzes electron transfer from NADH through the respiratory chain, using ubiquinone as an electron acceptor. Essential for the catalytic activity and assembly of complex I. The sequence is that of NADH-ubiquinone oxidoreductase chain 2 from Nandinia binotata (African palm civet).